Reading from the N-terminus, the 139-residue chain is Histone H2B (139 aa).

Low complexity predominate over residues 1–37 (MAPKSVASKAPASQASKAPAAASKAPAKAAKTSAAPK). A disordered region spans residues 1–48 (MAPKSVASKAPASQASKAPAAASKAPAKAAKTSAAPKDGAKKRSKKRV). Lysine 9 bears the N6-acetyllysine; alternate mark. Lysine 9 participates in a covalent cross-link: Glycyl lysine isopeptide (Lys-Gly) (interchain with G-Cter in SUMO); alternate. Serine 13 is subject to Phosphoserine. Position 17 is an N6-acetyllysine (lysine 17). Lysine 134 participates in a covalent cross-link: Glycyl lysine isopeptide (Lys-Gly) (interchain with G-Cter in ubiquitin).

This sequence belongs to the histone H2B family. As to quaternary structure, the nucleosome is a histone octamer containing two molecules each of H2A, H2B, H3 and H4 assembled in one H3-H4 heterotetramer and two H2A-H2B heterodimers. The octamer wraps approximately 147 bp of DNA. Post-translationally, monoubiquitinated by the UBC2-BRE1 complex to form H2BK123ub1. H2BK123ub1 gives a specific tag for epigenetic transcriptional activation and is also prerequisite for H3K4me and H3K79me formation. H2BK123ub1 also modulates the formation of double-strand breaks during meiosis and is a prerequisite for DNA-damage checkpoint activation. Phosphorylated to form H2BS10ph during progression through meiotic prophase. May be correlated with chromosome condensation. In terms of processing, acetylation of N-terminal lysines and particularly formation of H2BK11ac has a positive effect on transcription. Post-translationally, sumoylation to form H2BK6su occurs preferentially near the telomeres and represses gene transcription.

The protein resides in the nucleus. It is found in the chromosome. Core component of nucleosome. Nucleosomes wrap and compact DNA into chromatin, limiting DNA accessibility to the cellular machineries which require DNA as a template. Histones thereby play a central role in transcription regulation, DNA repair, DNA replication and chromosomal stability. DNA accessibility is regulated via a complex set of post-translational modifications of histones, also called histone code, and nucleosome remodeling. This Cryptococcus neoformans var. neoformans serotype D (strain B-3501A) (Filobasidiella neoformans) protein is Histone H2B (HTB1).